The sequence spans 84 residues: Putative membrane protein insertion efficiency factor (84 aa).

The disordered stretch occupies residues 63–84; the sequence is WGGSGYDPVPGADPEHDRRPRG. Positions 75–84 are enriched in basic and acidic residues; the sequence is DPEHDRRPRG.

Belongs to the UPF0161 family.

Its subcellular location is the cell inner membrane. Functionally, could be involved in insertion of integral membrane proteins into the membrane. The protein is Putative membrane protein insertion efficiency factor of Cereibacter sphaeroides (strain ATCC 17029 / ATH 2.4.9) (Rhodobacter sphaeroides).